The sequence spans 402 residues: Sulfate adenylyltransferase (402 aa).

Belongs to the sulfate adenylyltransferase family.

It carries out the reaction sulfate + ATP + H(+) = adenosine 5'-phosphosulfate + diphosphate. Its pathway is sulfur metabolism; hydrogen sulfide biosynthesis; sulfite from sulfate: step 1/3. In Thiobacillus denitrificans (strain ATCC 25259 / T1), this protein is Sulfate adenylyltransferase.